A 1346-amino-acid chain; its full sequence is Cytokinesis protein sepH (1346 aa).

The tract at residues 1–50 (MVSRSNEGPEAPHPASRTPGAPAKGRLTRLGSSPSKRDDKAKDDRMGKTS) is disordered. A compositionally biased stretch (basic and acidic residues) spans 35–50 (SKRDDKAKDDRMGKTS). Positions 60 to 310 (YQLGDCLGRG…ARKLLKHPWI (251 aa)) constitute a Protein kinase domain. ATP-binding positions include 66–74 (LGRGAFGSV) and Lys89. Residue Asp182 is the Proton acceptor of the active site. Disordered regions lie at residues 342-380 (RSPESNALRRGTRNENQNPPSLRLDTRHTPTKVTLPSPV), 446-497 (DESF…HMRR), and 1211-1295 (LCKL…AGAS). 2 stretches are compositionally biased toward polar residues: residues 477 to 489 (QQANSGTSQSQNG) and 1220 to 1249 (RGSTSATSPGLLANQSAPVTPQLSRQNQSK).

Belongs to the protein kinase superfamily. Ser/Thr protein kinase family. CDC7 subfamily. Mg(2+) serves as cofactor.

It carries out the reaction L-seryl-[protein] + ATP = O-phospho-L-seryl-[protein] + ADP + H(+). The catalysed reaction is L-threonyl-[protein] + ATP = O-phospho-L-threonyl-[protein] + ADP + H(+). In terms of biological role, required for early events during cytokinesis including localization of cytoskeletal components to the cytokinetic ring. This is Cytokinesis protein sepH from Emericella nidulans (strain FGSC A4 / ATCC 38163 / CBS 112.46 / NRRL 194 / M139) (Aspergillus nidulans).